A 214-amino-acid chain; its full sequence is Ceramide-1-phosphate transfer protein (214 aa).

D56, K60, R106, R110, and H150 together coordinate an N-acylsphingoid base 1-phosphate.

This sequence belongs to the GLTP family.

It localises to the cytoplasm. The protein resides in the cytosol. The protein localises to the golgi apparatus. It is found in the trans-Golgi network membrane. Its subcellular location is the cell membrane. It localises to the endosome membrane. The protein resides in the nucleus outer membrane. The enzyme catalyses N-(hexadecanoyl)-sphing-4-enine-1-phosphate(in) = N-(hexadecanoyl)-sphing-4-enine-1-phosphate(out). It carries out the reaction N-(9Z-octadecenoyl)-sphing-4-enine-1-phosphate(in) = N-(9Z-octadecenoyl)-sphing-4-enine-1-phosphate(out). Its function is as follows. Mediates the intracellular transfer of ceramide-1-phosphate (C1P) between organelle membranes and the cell membrane. Required for normal structure of the Golgi stacks. Can bind phosphoceramides with a variety of aliphatic chains, but has a preference for lipids with saturated C16:0 or monounsaturated C18:1 aliphatic chains, and is inefficient with phosphoceramides containing lignoceryl (C24:0). Plays a role in the regulation of the cellular levels of ceramide-1-phosphate, and thereby contributes to the regulation of phospholipase PLA2G4A activity and the release of arachidonic acid. Has no activity with galactosylceramide, lactosylceramide, sphingomyelin, phosphatidylcholine, phosphatidic acid and ceramide. C1P transfer is stimulated by phosphatidylserine in C1P source vesicles. Regulates autophagy, inflammasome mediated IL1B and IL18 processing, and pyroptosis, but not apoptosis. In Bos taurus (Bovine), this protein is Ceramide-1-phosphate transfer protein (CPTP).